A 154-amino-acid chain; its full sequence is MSKAKQALYLIVSLLVIIADQLLKNYIVTNFKIGDEKTIIPGVLSFTYLQNDGAAWNIFSGQMILFYLISIAAIAVVIYYLFNPKYKNGLFDTGLALVLGGIIGNFIDRLHLKYVIDMLQLDFIQFNIFNIADSAITVGIILVFIYLIFISEKD.

3 helical membrane-spanning segments follow: residues Leu-8–Val-28, Ile-58–Ile-78, and Asn-88–Asp-108. Residues Asp-117 and Asp-133 contribute to the active site. A helical membrane pass occupies residues Ile-131–Ser-151.

It belongs to the peptidase A8 family.

The protein localises to the cell membrane. It carries out the reaction Release of signal peptides from bacterial membrane prolipoproteins. Hydrolyzes -Xaa-Yaa-Zaa-|-(S,diacylglyceryl)Cys-, in which Xaa is hydrophobic (preferably Leu), and Yaa (Ala or Ser) and Zaa (Gly or Ala) have small, neutral side chains.. It functions in the pathway protein modification; lipoprotein biosynthesis (signal peptide cleavage). This protein specifically catalyzes the removal of signal peptides from prolipoproteins. This chain is Lipoprotein signal peptidase, found in Lactobacillus johnsonii (strain CNCM I-12250 / La1 / NCC 533).